The sequence spans 289 residues: 4-hydroxy-tetrahydrodipicolinate synthase (289 aa).

Threonine 43 serves as a coordination point for pyruvate. Tyrosine 131 functions as the Proton donor/acceptor in the catalytic mechanism. Lysine 160 (schiff-base intermediate with substrate) is an active-site residue. Valine 200 contacts pyruvate.

This sequence belongs to the DapA family. In terms of assembly, homotetramer; dimer of dimers.

Its subcellular location is the cytoplasm. It carries out the reaction L-aspartate 4-semialdehyde + pyruvate = (2S,4S)-4-hydroxy-2,3,4,5-tetrahydrodipicolinate + H2O + H(+). Its pathway is amino-acid biosynthesis; L-lysine biosynthesis via DAP pathway; (S)-tetrahydrodipicolinate from L-aspartate: step 3/4. Its function is as follows. Catalyzes the condensation of (S)-aspartate-beta-semialdehyde [(S)-ASA] and pyruvate to 4-hydroxy-tetrahydrodipicolinate (HTPA). The sequence is that of 4-hydroxy-tetrahydrodipicolinate synthase from Methanococcus maripaludis (strain C6 / ATCC BAA-1332).